A 456-amino-acid chain; its full sequence is tRNA modification GTPase MnmE (456 aa).

The (6S)-5-formyl-5,6,7,8-tetrahydrofolate site is built by Arg24, Glu81, and Lys120. A TrmE-type G domain is found at Gly216 to Gly379. Asn226 is a K(+) binding site. GTP is bound by residues Asn226 to Ser231, Thr245 to Thr251, Asp270 to Gly273, Asn335 to Asp338, and Ser359 to Arg361. Ser230 is a Mg(2+) binding site. Positions 245, 247, and 250 each coordinate K(+). A Mg(2+)-binding site is contributed by Thr251. A (6S)-5-formyl-5,6,7,8-tetrahydrofolate-binding site is contributed by Lys456.

Belongs to the TRAFAC class TrmE-Era-EngA-EngB-Septin-like GTPase superfamily. TrmE GTPase family. As to quaternary structure, homodimer. Heterotetramer of two MnmE and two MnmG subunits. The cofactor is K(+).

Its subcellular location is the cytoplasm. Exhibits a very high intrinsic GTPase hydrolysis rate. Involved in the addition of a carboxymethylaminomethyl (cmnm) group at the wobble position (U34) of certain tRNAs, forming tRNA-cmnm(5)s(2)U34. In Pseudomonas savastanoi pv. phaseolicola (strain 1448A / Race 6) (Pseudomonas syringae pv. phaseolicola (strain 1448A / Race 6)), this protein is tRNA modification GTPase MnmE.